We begin with the raw amino-acid sequence, 138 residues long: Large ribosomal subunit protein uL16 (138 aa).

This sequence belongs to the universal ribosomal protein uL16 family. In terms of assembly, part of the 50S ribosomal subunit.

In terms of biological role, binds 23S rRNA and is also seen to make contacts with the A and possibly P site tRNAs. The polypeptide is Large ribosomal subunit protein uL16 (Anaeromyxobacter sp. (strain Fw109-5)).